Reading from the N-terminus, the 541-residue chain is Chloride channel CLIC-like protein 1 (541 aa).

The N-terminal stretch at 1–18 (MLCSLLLCGCLLLITGYA) is a signal peptide. Topologically, residues 19–184 (HDDDWIDPTD…EDYFGVDPYN (166 aa)) are lumenal. A helical membrane pass occupies residues 185–205 (VFMVLLCLLCIVALVATELWT). Topologically, residues 206 to 217 (YVRWHTQLKRVC) are cytoplasmic. A helical membrane pass occupies residues 218 to 238 (IISFLVSLGWNWIYLYKVAFA). The Lumenal portion of the chain corresponds to 239–329 (QHQANVAKMA…GEFIKALMKE (91 aa)). The helical transmembrane segment at 330 to 350 (IPVLLQIPVLVILALAVLGFC) threads the bilayer. Residues 351-541 (YGAGQSVPML…GTDPVSSPCG (191 aa)) are Cytoplasmic-facing. The tract at residues 362-381 (HFRGPEREPPRALEPDDRRR) is disordered. Over residues 364-381 (RGPEREPPRALEPDDRRR) the composition is skewed to basic and acidic residues. 2 positions are modified to phosphoserine: serine 434 and serine 438. A Phosphothreonine modification is found at threonine 482. Serine 504 is subject to Phosphoserine. Residues 511–522 (QLKTDSECRPHS) are compositionally biased toward basic and acidic residues. The tract at residues 511–541 (QLKTDSECRPHSTEAAAAAARGTDPVSSPCG) is disordered.

Belongs to the chloride channel MCLC family. As to quaternary structure, homomultimers. Interacts with mitochondrial protein PIGBOS1 (via C-terminus); the interaction occurs at the mitochondria-associated endoplasmic reticulum (ER) membrane, a zone of contact between the ER and mitochondrial membranes, but does not appear to play a role in ER-mitochondria tethering and is not affected by ER stress. Interacts with CALR. In terms of tissue distribution, expressed in testis (spermatocytes), liver and lung (at protein level). Expressed in spleen, liver, testis, kidney, heart, brain and lung.

The protein resides in the endoplasmic reticulum membrane. The catalysed reaction is chloride(in) = chloride(out). It carries out the reaction bromide(in) = bromide(out). The enzyme catalyses nitrate(in) = nitrate(out). It catalyses the reaction fluoride(in) = fluoride(out). Anion-selective channel with Ca(2+)-dependent and voltage-independent gating. Permeable to small monovalent anions with selectivity for bromide &gt; chloride &gt; nitrate &gt; fluoride. Operates in the endoplasmic reticulum (ER) membrane where it mediates chloride efflux to compensate for the loss of positive charges from the ER lumen upon Ca(2+) release. Contributes to the maintenance of ER Ca(2+) pools and activation of unfolded protein response to prevent accumulation of misfolded proteins in the ER lumen. Particularly involved in ER homeostasis mechanisms underlying motor neurons and retinal photoreceptors survival. The polypeptide is Chloride channel CLIC-like protein 1 (Rattus norvegicus (Rat)).